The primary structure comprises 217 residues: Peroxiredoxin (217 aa).

Residues 2–159 (VVIGEKFPEV…IVRLVKALQT (158 aa)) enclose the Thioredoxin domain. Residue Cys46 is the Cysteine sulfenic acid (-SOH) intermediate of the active site. Arg122 serves as a coordination point for substrate.

The protein belongs to the peroxiredoxin family. Prx6 subfamily. As to quaternary structure, homodecamer. Pentamer of dimers that assemble into a ring structure.

The protein resides in the cytoplasm. The enzyme catalyses a hydroperoxide + [thioredoxin]-dithiol = an alcohol + [thioredoxin]-disulfide + H2O. Functionally, thiol-specific peroxidase that catalyzes the reduction of hydrogen peroxide and organic hydroperoxides to water and alcohols, respectively. Plays a role in cell protection against oxidative stress by detoxifying peroxides. The chain is Peroxiredoxin from Methanococcus maripaludis (strain DSM 14266 / JCM 13030 / NBRC 101832 / S2 / LL).